Reading from the N-terminus, the 581-residue chain is MTIDFRNVNTLWASILVETLHRLGLTTAVICPGSRSTPLTIAFANHSNIEAIPILDERSASFFALGIAKKSGLPVVLVCTSGTAGANFYPAVIEAKESHVPLLILTADRPPELRHCHAGQTIDQVKLYGNYPNWQTEIAVPSAEEGMINYLRQTLIYAWERSLFPARGVVHLNLPFREPLAPIPNSDTEKIQFNFDVENFFTEINLLNFPSSNRIEKYEKIIPKWQLFQRGIIIAGVDHSYNPQEYCRAIARLSEFLKYPVLGEALSPVRNYAALNPYLISTYDLILRNSSLAENLKPDIVIQIGELPTSKELRTWLDITQPPRWIIDNKGENLDALHGKTIHLRTSIEQLANSLSFKETISNSPYLKLWCDTEKKVRKTIDQTLESIDSLLEGKIAWLLSQTLPENTPIFIANSMSVRNAEFFWQPNNFKYIPYFNRGANGIDGTLSTALGIAHHHQSSVMLTGDLALLHDNNGFLINKKFRGHLTIILVNNDGGGIFEMLPIAQFDPYFEDFFATPQTVNFGKLCLAYGIDHYLIQDWQQLKQLLNPLPETGIRVLELNTNRKLDAEWLKTNLSKFSLT.

It belongs to the TPP enzyme family. MenD subfamily. Homodimer. Requires Mg(2+) as cofactor. The cofactor is Mn(2+). Thiamine diphosphate is required as a cofactor.

It catalyses the reaction isochorismate + 2-oxoglutarate + H(+) = 5-enolpyruvoyl-6-hydroxy-2-succinyl-cyclohex-3-ene-1-carboxylate + CO2. It participates in quinol/quinone metabolism; 1,4-dihydroxy-2-naphthoate biosynthesis; 1,4-dihydroxy-2-naphthoate from chorismate: step 2/7. The protein operates within cofactor biosynthesis; phylloquinone biosynthesis. In terms of biological role, catalyzes the thiamine diphosphate-dependent decarboxylation of 2-oxoglutarate and the subsequent addition of the resulting succinic semialdehyde-thiamine pyrophosphate anion to isochorismate to yield 2-succinyl-5-enolpyruvyl-6-hydroxy-3-cyclohexene-1-carboxylate (SEPHCHC). The sequence is that of 2-succinyl-5-enolpyruvyl-6-hydroxy-3-cyclohexene-1-carboxylate synthase from Gloeothece citriformis (strain PCC 7424) (Cyanothece sp. (strain PCC 7424)).